The primary structure comprises 419 residues: S-adenosylmethionine synthase (419 aa).

An ATP-binding site is contributed by His-15. Asp-17 is a Mg(2+) binding site. Glu-43 lines the K(+) pocket. L-methionine contacts are provided by Glu-56 and Gln-100. Residues 100–110 (QSPDIAQGVDE) form a flexible loop region. ATP is bound by residues 171-173 (DGK), 248-249 (KF), Asp-257, 263-264 (RK), Ala-280, and Lys-284. Asp-257 lines the L-methionine pocket. Lys-288 contacts L-methionine.

The protein belongs to the AdoMet synthase family. Homotetramer; dimer of dimers. It depends on Mg(2+) as a cofactor. K(+) is required as a cofactor.

It localises to the cytoplasm. It carries out the reaction L-methionine + ATP + H2O = S-adenosyl-L-methionine + phosphate + diphosphate. The protein operates within amino-acid biosynthesis; S-adenosyl-L-methionine biosynthesis; S-adenosyl-L-methionine from L-methionine: step 1/1. Functionally, catalyzes the formation of S-adenosylmethionine (AdoMet) from methionine and ATP. The overall synthetic reaction is composed of two sequential steps, AdoMet formation and the subsequent tripolyphosphate hydrolysis which occurs prior to release of AdoMet from the enzyme. The polypeptide is S-adenosylmethionine synthase (Synechococcus sp. (strain WH7803)).